Here is a 428-residue protein sequence, read N- to C-terminus: Trigger factor (428 aa).

In terms of domain architecture, PPIase FKBP-type spans 163 to 248; sequence GDTAIIDFEG…INDVKVKELS (86 aa).

The protein belongs to the FKBP-type PPIase family. Tig subfamily.

The protein resides in the cytoplasm. The catalysed reaction is [protein]-peptidylproline (omega=180) = [protein]-peptidylproline (omega=0). Involved in protein export. Acts as a chaperone by maintaining the newly synthesized protein in an open conformation. Functions as a peptidyl-prolyl cis-trans isomerase. In Clostridioides difficile (strain 630) (Peptoclostridium difficile), this protein is Trigger factor.